A 164-amino-acid polypeptide reads, in one-letter code: UPF0305 protein MJ0646 (164 aa).

Belongs to the UPF0305 family.

The protein is UPF0305 protein MJ0646 of Methanocaldococcus jannaschii (strain ATCC 43067 / DSM 2661 / JAL-1 / JCM 10045 / NBRC 100440) (Methanococcus jannaschii).